The following is an 820-amino-acid chain: MDLLYTTVRKGNANTFSFTETQHNFEFLCNTSSCNVLAFTTTNELTEPSPIQGWGFHIYVVDLNAPWFPYRVTSNKYPISVLQWDVLGRYLLVGDRNGHVQIFVQKDNLLSEWKSVYSVKFPGENIIAAAFFHNGRKLNLQTDKKDQYLYLEKFQKVKFAASVRQFGGVPVEGVLIVSATGMLGAFVIPPESNANIQKLSEPIKLVPVTESLAVTRNYYTTADICYGKNGYFRVAVGNGDSKSANSNMIQCFRVAVKQREETLEINSTALPSFFLAEGMGKDLKELRVAHVQWVFSEDADSLIVASNHTGGGCFVEQWELTEESTPIHKLFQSNKNEPFKTLLWVSKSQYMYTSKVIKICTTKLNFLSSSFVYLAMSDNSIHCLQRDTLKRLTCTNIVSIRDPNDHSSKQIKLGLKIGAIDVTHLGHLFVTLDTFGQLYVYRCNFMCQDQLGTPALIVQTVNLLEYCLVTGLDSLDILLTLKTQILENVLERLTENFHRQPPNVQQYYYVNFLTMKIALYRLSISGQQKAHDLSNLLILHSILIAFKSLLRPSDLTSHDKGPAENLAMVLSESVPDVDKVLLNVEAKEFTMERPTLQSLQQLIQWVADLALNILAKLPESRSFMSNKSQGYDISKDIIALNSIRELLVMIRIWGLLNPQCLPVFSRSADNLDILGTLFRLLTKLSLNPNEPDDLLLDECCLLPNQVLIPQLQYVPSRTMIASPLLPHVTLPVMCDYGVENESLKFCPEVPIVEGGLSNDNVIDSVMYLQLGRRPPSLRRCTRCGSCSSVVSVAKTAAMKAWEQRWIDKCRCNGFWRLEVA.

WD repeat units lie at residues 74 to 114 (SNKY…SEWK), 621 to 665 (RSFM…PVFS), and 757 to 811 (SNDN…KCRC).

Belongs to the Mediator complex subunit 16 family. In terms of assembly, component of the Mediator complex.

It is found in the nucleus. In terms of biological role, component of the Mediator complex, a coactivator involved in the regulated transcription of nearly all RNA polymerase II-dependent genes. Mediator functions as a bridge to convey information from gene-specific regulatory proteins to the basal RNA polymerase II transcription machinery. Mediator is recruited to promoters by direct interactions with regulatory proteins and serves as a scaffold for the assembly of a functional preinitiation complex with RNA polymerase II and the general transcription factors. This chain is Mediator of RNA polymerase II transcription subunit 16 (MED16), found in Aedes aegypti (Yellowfever mosquito).